The chain runs to 491 residues: Glycogen synthase 1 (491 aa).

Residue Lys15 participates in ADP-alpha-D-glucose binding.

It belongs to the glycosyltransferase 1 family. Bacterial/plant glycogen synthase subfamily.

The catalysed reaction is [(1-&gt;4)-alpha-D-glucosyl](n) + ADP-alpha-D-glucose = [(1-&gt;4)-alpha-D-glucosyl](n+1) + ADP + H(+). It functions in the pathway glycan biosynthesis; glycogen biosynthesis. Functionally, synthesizes alpha-1,4-glucan chains using ADP-glucose. The protein is Glycogen synthase 1 of Synechococcus sp. (strain JA-2-3B'a(2-13)) (Cyanobacteria bacterium Yellowstone B-Prime).